A 345-amino-acid polypeptide reads, in one-letter code: Ribosomal RNA small subunit methyltransferase C (345 aa).

The protein belongs to the methyltransferase superfamily. RsmC family. Monomer.

Its subcellular location is the cytoplasm. It catalyses the reaction guanosine(1207) in 16S rRNA + S-adenosyl-L-methionine = N(2)-methylguanosine(1207) in 16S rRNA + S-adenosyl-L-homocysteine + H(+). In terms of biological role, specifically methylates the guanine in position 1207 of 16S rRNA in the 30S particle. In Shewanella denitrificans (strain OS217 / ATCC BAA-1090 / DSM 15013), this protein is Ribosomal RNA small subunit methyltransferase C.